The sequence spans 376 residues: Carbamoyl phosphate synthase small chain (376 aa).

A CPSase region spans residues 1 to 187 (MKALLVLEDG…AEDGSYAWRG (187 aa)). L-glutamine is bound by residues serine 45, glycine 239, and glycine 241. One can recognise a Glutamine amidotransferase type-1 domain in the interval 191-376 (PLLVYDFGIK…RKIIGESAGA (186 aa)). Catalysis depends on cysteine 266, which acts as the Nucleophile. L-glutamine is bound by residues leucine 267, glutamine 270, asparagine 308, glycine 310, and phenylalanine 311. Residues histidine 349 and glutamate 351 contribute to the active site.

The protein belongs to the CarA family. Composed of two chains; the small (or glutamine) chain promotes the hydrolysis of glutamine to ammonia, which is used by the large (or ammonia) chain to synthesize carbamoyl phosphate. Tetramer of heterodimers (alpha,beta)4.

It catalyses the reaction hydrogencarbonate + L-glutamine + 2 ATP + H2O = carbamoyl phosphate + L-glutamate + 2 ADP + phosphate + 2 H(+). It carries out the reaction L-glutamine + H2O = L-glutamate + NH4(+). Its pathway is amino-acid biosynthesis; L-arginine biosynthesis; carbamoyl phosphate from bicarbonate: step 1/1. It participates in pyrimidine metabolism; UMP biosynthesis via de novo pathway; (S)-dihydroorotate from bicarbonate: step 1/3. In terms of biological role, small subunit of the glutamine-dependent carbamoyl phosphate synthetase (CPSase). CPSase catalyzes the formation of carbamoyl phosphate from the ammonia moiety of glutamine, carbonate, and phosphate donated by ATP, constituting the first step of 2 biosynthetic pathways, one leading to arginine and/or urea and the other to pyrimidine nucleotides. The small subunit (glutamine amidotransferase) binds and cleaves glutamine to supply the large subunit with the substrate ammonia. The sequence is that of Carbamoyl phosphate synthase small chain from Desulfovibrio desulfuricans (strain ATCC 27774 / DSM 6949 / MB).